We begin with the raw amino-acid sequence, 126 residues long: MTPEQQDLMDRAEQSLQAARILADEALFDVSVSRSYYAMFYCARASLLALNLSSKSHSGTISLFGQHLAAAGRLPIEIHRQLIDAERLRILGDYGGANSHCSQQDAQVLIAQSARFMQIAMEFLAQ.

This sequence belongs to the UPF0332 family.

The protein is UPF0332 protein glr0978 of Gloeobacter violaceus (strain ATCC 29082 / PCC 7421).